The following is a 242-amino-acid chain: Probable transcriptional regulatory protein Csac_0964 (242 aa).

A disordered region spans residues 1–20 (MSGHSKWANIRHKKEKTDAQ).

The protein belongs to the TACO1 family.

Its subcellular location is the cytoplasm. The polypeptide is Probable transcriptional regulatory protein Csac_0964 (Caldicellulosiruptor saccharolyticus (strain ATCC 43494 / DSM 8903 / Tp8T 6331)).